Consider the following 195-residue polypeptide: Nuclear transcription factor Y subunit C-10 (195 aa).

The segment at 1-24 is disordered; that stretch reads MRRPKSSHVRMEPVAPRSHNTMPM.

This sequence belongs to the NFYC/HAP5 subunit family. As to quaternary structure, heterotrimeric transcription factor composed of three components, NF-YA, NF-YB and NF-YC. NF-YB and NF-YC must interact and dimerize for NF-YA association and DNA binding.

The protein resides in the nucleus. Stimulates the transcription of various genes by recognizing and binding to a CCAAT motif in promoters. The protein is Nuclear transcription factor Y subunit C-10 (NFYC10) of Arabidopsis thaliana (Mouse-ear cress).